Here is a 72-residue protein sequence, read N- to C-terminus: Large ribosomal subunit protein bL32c (72 aa).

Positions 49-72 are disordered; the sequence is PPAPVSENWDDEAKGFGKDLDAAE. A compositionally biased stretch (basic and acidic residues) spans 59–72; it reads DEAKGFGKDLDAAE.

This sequence belongs to the bacterial ribosomal protein bL32 family.

It localises to the plastid. The protein resides in the chloroplast. The chain is Large ribosomal subunit protein bL32c from Ostreococcus tauri.